The chain runs to 347 residues: Phosphate acyltransferase (347 aa).

The protein belongs to the PlsX family. Homodimer. Probably interacts with PlsY.

The protein localises to the cytoplasm. It catalyses the reaction a fatty acyl-[ACP] + phosphate = an acyl phosphate + holo-[ACP]. It participates in lipid metabolism; phospholipid metabolism. Catalyzes the reversible formation of acyl-phosphate (acyl-PO(4)) from acyl-[acyl-carrier-protein] (acyl-ACP). This enzyme utilizes acyl-ACP as fatty acyl donor, but not acyl-CoA. The protein is Phosphate acyltransferase of Pediococcus pentosaceus (strain ATCC 25745 / CCUG 21536 / LMG 10740 / 183-1w).